The sequence spans 153 residues: SsrA-binding protein (153 aa).

This sequence belongs to the SmpB family.

Its subcellular location is the cytoplasm. Functionally, required for rescue of stalled ribosomes mediated by trans-translation. Binds to transfer-messenger RNA (tmRNA), required for stable association of tmRNA with ribosomes. tmRNA and SmpB together mimic tRNA shape, replacing the anticodon stem-loop with SmpB. tmRNA is encoded by the ssrA gene; the 2 termini fold to resemble tRNA(Ala) and it encodes a 'tag peptide', a short internal open reading frame. During trans-translation Ala-aminoacylated tmRNA acts like a tRNA, entering the A-site of stalled ribosomes, displacing the stalled mRNA. The ribosome then switches to translate the ORF on the tmRNA; the nascent peptide is terminated with the 'tag peptide' encoded by the tmRNA and targeted for degradation. The ribosome is freed to recommence translation, which seems to be the essential function of trans-translation. The chain is SsrA-binding protein from Orientia tsutsugamushi (strain Boryong) (Rickettsia tsutsugamushi).